The sequence spans 414 residues: Esterase FrsA (414 aa).

This sequence belongs to the FrsA family.

The enzyme catalyses a carboxylic ester + H2O = an alcohol + a carboxylate + H(+). Catalyzes the hydrolysis of esters. This Shigella dysenteriae serotype 1 (strain Sd197) protein is Esterase FrsA.